Consider the following 232-residue polypeptide: Sugar fermentation stimulation protein homolog (232 aa).

Belongs to the SfsA family.

This chain is Sugar fermentation stimulation protein homolog, found in Moorella thermoacetica (strain ATCC 39073 / JCM 9320).